The following is a 327-amino-acid chain: Ribosomal RNA small subunit methyltransferase H (327 aa).

S-adenosyl-L-methionine-binding positions include glycine 42–histidine 44, aspartate 61, leucine 95, aspartate 109, and glutamine 116.

Belongs to the methyltransferase superfamily. RsmH family.

It is found in the cytoplasm. The enzyme catalyses cytidine(1402) in 16S rRNA + S-adenosyl-L-methionine = N(4)-methylcytidine(1402) in 16S rRNA + S-adenosyl-L-homocysteine + H(+). Functionally, specifically methylates the N4 position of cytidine in position 1402 (C1402) of 16S rRNA. In Desulfovibrio desulfuricans (strain ATCC 27774 / DSM 6949 / MB), this protein is Ribosomal RNA small subunit methyltransferase H.